The sequence spans 459 residues: Cysteine--tRNA ligase (459 aa).

Position 28 (Cys28) interacts with Zn(2+). Residues 30–40 (VTIYDLCHIGH) carry the 'HIGH' region motif. Zn(2+)-binding residues include Cys209, His234, and Glu238. The 'KMSKS' region motif lies at 266 to 270 (KMSKS). Lys269 contacts ATP.

This sequence belongs to the class-I aminoacyl-tRNA synthetase family. As to quaternary structure, monomer. It depends on Zn(2+) as a cofactor.

The protein localises to the cytoplasm. It catalyses the reaction tRNA(Cys) + L-cysteine + ATP = L-cysteinyl-tRNA(Cys) + AMP + diphosphate. This Shewanella baltica (strain OS185) protein is Cysteine--tRNA ligase.